A 390-amino-acid chain; its full sequence is Small ribosomal subunit protein uS9m (390 aa).

The interval 368 to 390 (PRIRERKKPGQEGARRKFTWKKR) is disordered.

This sequence belongs to the universal ribosomal protein uS9 family. In terms of assembly, component of the mitochondrial ribosome small subunit (28S) which comprises a 12S rRNA and about 30 distinct proteins.

The protein resides in the mitochondrion. The sequence is that of Small ribosomal subunit protein uS9m (Mrps9) from Mus musculus (Mouse).